The sequence spans 206 residues: Holliday junction branch migration complex subunit RuvA (206 aa).

Residues 1–64 (MIGKLKGTVD…EDQIRLFGFV (64 aa)) are domain I. The segment at 65–143 (TEAEREWFRL…AFTAADPGLA (79 aa)) is domain II. The interval 144-154 (RLAADVEATEA) is flexible linker. The domain III stretch occupies residues 154-206 (AAGGALADAVSALVNLGYGQAQAHTAIAAAGRKAGEDATTETLIRLGLKELAK).

Belongs to the RuvA family. Homotetramer. Forms an RuvA(8)-RuvB(12)-Holliday junction (HJ) complex. HJ DNA is sandwiched between 2 RuvA tetramers; dsDNA enters through RuvA and exits via RuvB. An RuvB hexamer assembles on each DNA strand where it exits the tetramer. Each RuvB hexamer is contacted by two RuvA subunits (via domain III) on 2 adjacent RuvB subunits; this complex drives branch migration. In the full resolvosome a probable DNA-RuvA(4)-RuvB(12)-RuvC(2) complex forms which resolves the HJ.

Its subcellular location is the cytoplasm. Its function is as follows. The RuvA-RuvB-RuvC complex processes Holliday junction (HJ) DNA during genetic recombination and DNA repair, while the RuvA-RuvB complex plays an important role in the rescue of blocked DNA replication forks via replication fork reversal (RFR). RuvA specifically binds to HJ cruciform DNA, conferring on it an open structure. The RuvB hexamer acts as an ATP-dependent pump, pulling dsDNA into and through the RuvAB complex. HJ branch migration allows RuvC to scan DNA until it finds its consensus sequence, where it cleaves and resolves the cruciform DNA. The polypeptide is Holliday junction branch migration complex subunit RuvA (Azorhizobium caulinodans (strain ATCC 43989 / DSM 5975 / JCM 20966 / LMG 6465 / NBRC 14845 / NCIMB 13405 / ORS 571)).